The sequence spans 257 residues: Tryptophan synthase alpha chain (257 aa).

Active-site proton acceptor residues include Glu-44 and Asp-55.

Belongs to the TrpA family. As to quaternary structure, tetramer of two alpha and two beta chains.

It carries out the reaction (1S,2R)-1-C-(indol-3-yl)glycerol 3-phosphate + L-serine = D-glyceraldehyde 3-phosphate + L-tryptophan + H2O. It participates in amino-acid biosynthesis; L-tryptophan biosynthesis; L-tryptophan from chorismate: step 5/5. In terms of biological role, the alpha subunit is responsible for the aldol cleavage of indoleglycerol phosphate to indole and glyceraldehyde 3-phosphate. This is Tryptophan synthase alpha chain from Chlamydia felis (strain Fe/C-56) (Chlamydophila felis).